Here is a 48-residue protein sequence, read N- to C-terminus: Sperm protamine P1 (48 aa).

The protein belongs to the protamine P1 family. As to expression, testis.

Its subcellular location is the nucleus. The protein localises to the chromosome. Functionally, protamines substitute for histones in the chromatin of sperm during the haploid phase of spermatogenesis. They compact sperm DNA into a highly condensed, stable and inactive complex. This Monophyllus redmani (Greater Antillean long-tongued bat) protein is Sperm protamine P1 (PRM1).